Consider the following 155-residue polypeptide: Large ribosomal subunit protein uL11 (155 aa).

The protein belongs to the universal ribosomal protein uL11 family. As to quaternary structure, part of the ribosomal stalk of the 50S ribosomal subunit. Interacts with L10 and the large rRNA to form the base of the stalk. L10 forms an elongated spine to which L12 dimers bind in a sequential fashion forming a multimeric L10(L12)X complex. Post-translationally, one or more lysine residues are methylated.

Its function is as follows. Forms part of the ribosomal stalk which helps the ribosome interact with GTP-bound translation factors. In Malacoplasma penetrans (strain HF-2) (Mycoplasma penetrans), this protein is Large ribosomal subunit protein uL11.